A 185-amino-acid chain; its full sequence is Ribosome-recycling factor (185 aa).

The protein belongs to the RRF family.

It is found in the cytoplasm. Its function is as follows. Responsible for the release of ribosomes from messenger RNA at the termination of protein biosynthesis. May increase the efficiency of translation by recycling ribosomes from one round of translation to another. This Vibrio cholerae serotype O1 (strain ATCC 39541 / Classical Ogawa 395 / O395) protein is Ribosome-recycling factor.